A 965-amino-acid polypeptide reads, in one-letter code: Isoleucine--tRNA ligase (965 aa).

The 'HIGH' region motif lies at 68–78; it reads PYANGSLHMGH. Residue Glu582 coordinates L-isoleucyl-5'-AMP. The 'KMSKS' region motif lies at 623 to 627; the sequence is KMSKS. ATP is bound at residue Lys626. Cys936, Cys939, Cys956, and Cys959 together coordinate Zn(2+).

This sequence belongs to the class-I aminoacyl-tRNA synthetase family. IleS type 1 subfamily. Monomer. It depends on Zn(2+) as a cofactor.

The protein localises to the cytoplasm. The catalysed reaction is tRNA(Ile) + L-isoleucine + ATP = L-isoleucyl-tRNA(Ile) + AMP + diphosphate. In terms of biological role, catalyzes the attachment of isoleucine to tRNA(Ile). As IleRS can inadvertently accommodate and process structurally similar amino acids such as valine, to avoid such errors it has two additional distinct tRNA(Ile)-dependent editing activities. One activity is designated as 'pretransfer' editing and involves the hydrolysis of activated Val-AMP. The other activity is designated 'posttransfer' editing and involves deacylation of mischarged Val-tRNA(Ile). This is Isoleucine--tRNA ligase from Prochlorococcus marinus (strain MIT 9515).